The primary structure comprises 312 residues: Olfactory receptor 8H3 (312 aa).

The Extracellular segment spans residues M1–M26. N-linked (GlcNAc...) asparagine glycosylation is present at N6. The helical transmembrane segment at A27–L47 threads the bilayer. Over L48–Q55 the chain is Cytoplasmic. Residues L56–T76 form a helical membrane-spanning segment. The Extracellular segment spans residues V77–A99. A disulfide bridge links C97 with C189. A helical membrane pass occupies residues Q100–Y120. The Cytoplasmic segment spans residues D121 to R139. The chain crosses the membrane as a helical span at residues L140–V160. The Extracellular portion of the chain corresponds to V161 to M197. A helical transmembrane segment spans residues L198–S217. The Cytoplasmic segment spans residues Y218–A237. The helical transmembrane segment at F238 to T258 threads the bilayer. The Extracellular portion of the chain corresponds to Y259–D271. The helical transmembrane segment at Q272 to L292 threads the bilayer. At R293–R312 the chain is on the cytoplasmic side.

Belongs to the G-protein coupled receptor 1 family.

It is found in the cell membrane. In terms of biological role, odorant receptor. The sequence is that of Olfactory receptor 8H3 (OR8H3) from Homo sapiens (Human).